We begin with the raw amino-acid sequence, 137 residues long: Methylmalonyl-CoA decarboxylase subunit delta (137 aa).

The helical transmembrane segment at 30 to 50 (VTVVLGMGITVVALIFLMYII) threads the bilayer.

It belongs to the OadG family. As to quaternary structure, the methylmalonyl-CoA decarboxylase is composed of four subunits: the carboxyltransferase alpha subunit (MmdA), the tunnel beta subunit (MmdB), the biotin-containing gamma subunit (MmdC) and the delta subunit (MmdD).

The protein resides in the cell membrane. The enzyme catalyses (S)-methylmalonyl-CoA + Na(+)(in) + H(+)(out) = propanoyl-CoA + Na(+)(out) + CO2. Its function is as follows. Subunit of the sodium ion pump methylmalonyl-CoA decarboxylase, which converts the chemical energy of a decarboxylation reaction into an electrochemical gradient of Na(+) ions across the cytoplasmic membrane, thereby creating a sodium ion motive force that is used for ATP synthesis. The delta subunit is required for catalytic activity as well as for the proper assembly of the individual subunits to an enzyme complex. This Propionigenium modestum protein is Methylmalonyl-CoA decarboxylase subunit delta.